The following is a 234-amino-acid chain: Proteasome subunit alpha (234 aa).

This sequence belongs to the peptidase T1A family. In terms of assembly, the 20S proteasome core is composed of 14 alpha and 14 beta subunits that assemble into four stacked heptameric rings, resulting in a barrel-shaped structure. The two inner rings, each composed of seven catalytic beta subunits, are sandwiched by two outer rings, each composed of seven alpha subunits. The catalytic chamber with the active sites is on the inside of the barrel. Has a gated structure, the ends of the cylinder being occluded by the N-termini of the alpha-subunits. Is capped at one or both ends by the proteasome regulatory ATPase, PAN.

Its subcellular location is the cytoplasm. Its activity is regulated as follows. The formation of the proteasomal ATPase PAN-20S proteasome complex, via the docking of the C-termini of PAN into the intersubunit pockets in the alpha-rings, triggers opening of the gate for substrate entry. Interconversion between the open-gate and close-gate conformations leads to a dynamic regulation of the 20S proteasome proteolysis activity. Its function is as follows. Component of the proteasome core, a large protease complex with broad specificity involved in protein degradation. This chain is Proteasome subunit alpha, found in Picrophilus torridus (strain ATCC 700027 / DSM 9790 / JCM 10055 / NBRC 100828 / KAW 2/3).